Consider the following 335-residue polypeptide: Nucleoid-associated protein CKO_00588 (335 aa).

This sequence belongs to the YejK family.

The protein resides in the cytoplasm. It localises to the nucleoid. This chain is Nucleoid-associated protein CKO_00588, found in Citrobacter koseri (strain ATCC BAA-895 / CDC 4225-83 / SGSC4696).